The chain runs to 458 residues: Transcription factor bHLH10 (458 aa).

The disordered stretch occupies residues 1-49 (MEEERESLYEEMGCFDPNTPAEVTVESSFSQAEPPPPPPQVLVAGSTSN). In terms of domain architecture, bHLH spans 243–292 (SRKSRTSPTERERRVHFNDRFFDLKNLIPNPTKIDRASIVGEAIDYIKEL). The tract at residues 315-338 (KRARVGEGGGGEDQEEEEDTVNYK) is disordered. The span at 324–334 (GGEDQEEEEDT) shows a compositional bias: acidic residues.

In terms of assembly, homodimer.

It localises to the nucleus. In Arabidopsis thaliana (Mouse-ear cress), this protein is Transcription factor bHLH10 (BHLH10).